A 313-amino-acid polypeptide reads, in one-letter code: NADH-ubiquinone oxidoreductase chain 1 (313 aa).

Helical transmembrane passes span 6–26 (LLSG…FTLL), 71–91 (VFPF…LWIL), 105–125 (MLLF…AGWF), 149–169 (MSLI…SMIM), 173–193 (FFVW…VSCV), 220–242 (GVGF…VLVI), 255–275 (FGMG…WVRA), and 293–313 (YLPS…ILNG).

This sequence belongs to the complex I subunit 1 family.

The protein localises to the mitochondrion inner membrane. It carries out the reaction a ubiquinone + NADH + 5 H(+)(in) = a ubiquinol + NAD(+) + 4 H(+)(out). In terms of biological role, core subunit of the mitochondrial membrane respiratory chain NADH dehydrogenase (Complex I) that is believed to belong to the minimal assembly required for catalysis. Complex I functions in the transfer of electrons from NADH to the respiratory chain. The immediate electron acceptor for the enzyme is believed to be ubiquinone. This chain is NADH-ubiquinone oxidoreductase chain 1 (ND1), found in Heterololigo bleekeri (Spear squid).